The sequence spans 1754 residues: Collagen alpha-1(XVIII) chain (1754 aa).

The signal sequence occupies residues 1–23 (MAPYPCGCHILLLLFCCLAAARA). Residues 42–104 (ATTIPEPQGP…TSAESPDAPE (63 aa)) form a disordered region. Positions 57 to 73 (TADTTTHVTPRNGSTEP) are enriched in polar residues. 3 N-linked (GlcNAc...) asparagine glycosylation sites follow: N68, N129, and N164. Positions 152–256 (LALAGPSSTP…APSQQLQRPD (105 aa)) are disordered. Residues 157 to 169 (PSSTPQENGTTLW) show a composition bias toward polar residues. Residues 215 to 253 (SGRASLSSLLGGAPPWGSLQDPDSQGLSPAAAAPSQQLQ) show a composition bias toward low complexity. Positions 329–446 (APAGRCLPLP…TQEDGYCVLI (118 aa)) constitute an FZ domain. 5 disulfides stabilise this stretch: C334/C397, C344/C390, C381/C419, C408/C443, and C412/C432. Residues 456–644 (EVGLLQLLGD…IAELKVRRDP (189 aa)) form the Laminin G-like domain. The interval 645–751 (QVSPMHCLDE…RTPGGRVKEG (107 aa)) is nonhelical region 1 (NC1). A disordered region spans residues 645-1443 (QVSPMHCLDE…GPPGTMGASS (799 aa)). Positions 672–681 (DARELLREET) are enriched in basic and acidic residues. T696 is subject to Phosphothreonine. Residues 717–738 (QTTVASLGAQTLPGSDSVSTWD) show a composition bias toward polar residues. Positions 752–785 (GLKGQKGEPGVPGPPGRAGPPGSPCLPGPPGLPC) are triple-helical region 1 (COL1). Pro residues predominate over residues 762–789 (VPGPPGRAGPPGSPCLPGPPGLPCPVSP). The segment at 786–795 (PVSPLGPAGP) is nonhelical region 2 (NC2). The triple-helical region 2 (COL2) stretch occupies residues 796–875 (ALQTVPGPQG…QGPPGPPGPS (80 aa)). Basic and acidic residues predominate over residues 815-831 (TPGRDGEPGDPGEDGKP). Positions 833 to 846 (DTGPQGFPGTPGDV) are enriched in low complexity. Residues 862-874 (PPGPQGPPGPPGP) are compositionally biased toward pro residues. Residues 876–899 (FRHDKLTFIDMEGSGFGGDLEALR) form a nonhelical region 3 (NC3) region. S889 carries an O-linked (Xyl...) (chondroitin sulfate) serine glycan. The segment at 900–1021 (GPRGFPGPPG…PGPPGPPGPG (122 aa)) is triple-helical region 3 (COL3). A compositionally biased stretch (pro residues) spans 904–914 (FPGPPGPPGVP). Residue N926 is glycosylated (N-linked (GlcNAc...) asparagine). Residues 930–942 (VPGPAGLPGVPGR) show a composition bias toward low complexity. Positions 946–961 (PGFPGLPGPPGPPGRE) are enriched in pro residues. Positions 976-1003 (AGAPGHKGSKGAPGPAGARGESGLAGAP) are enriched in low complexity. Residues 1005–1021 (PAGPPGPPGPPGPPGPG) show a composition bias toward pro residues. The interval 1022-1044 (LPAGFDDMEGSGGPFWSTARSAD) is nonhelical region 4 (NC4). The tract at residues 1045 to 1127 (GPQGPPGLPG…PGPPGPPGPV (83 aa)) is triple-helical region 4 (COL4). Residues 1053–1065 (PGLKGDPGVPGLP) are compositionally biased toward low complexity. Over residues 1095–1109 (KGDRGSRGEKGDPGK) the composition is skewed to basic and acidic residues. A compositionally biased stretch (pro residues) spans 1117–1126 (LPGPPGPPGP). The nonhelical region 5 (NC5) stretch occupies residues 1128–1141 (VYVSEQDGSVLSVP). Low complexity predominate over residues 1141-1153 (PGPEGRPGFAGFP). The interval 1142–1183 (GPEGRPGFAGFPGPAGPKGNLGSKGERGSPGPKGEKGEPGSI) is triple-helical region 5 (COL5). The interval 1184–1196 (FSPDGGALGPAQK) is nonhelical region 6 (NC6). Positions 1197–1269 (GAKGEPGFRG…PGPPGPPGTP (73 aa)) are triple-helical region 6 (COL6). A compositionally biased stretch (pro residues) spans 1254–1268 (PGPPGPPGPPGPPGT). The tract at residues 1270–1279 (VYDSNVFAES) is nonhelical region 7 (NC7). Positions 1280-1312 (SRPGPPGLPGNQGPPGPKGAKGEVGPPGPPGQF) are triple-helical region 7 (COL7). The span at 1282-1296 (PGPPGLPGNQGPPGP) shows a compositional bias: pro residues. Residues 1313–1324 (PFDFLQLEAEMK) form a nonhelical region 8 (NC8) region. The span at 1321-1341 (AEMKGEKGDRGDAGQKGERGE) shows a compositional bias: basic and acidic residues. Positions 1325-1346 (GEKGDRGDAGQKGERGEPGGGG) are triple-helical region 8 (COL8). The Cell attachment site signature appears at 1330–1332 (RGD). Residues 1347 to 1353 (FFGSSLP) form a nonhelical region 9 (NC9) region. Pro residues-rich tracts occupy residues 1353 to 1365 (PGPP…PGPR), 1401 to 1414 (PPGP…PSFP), and 1424 to 1436 (PGPP…PGPP). The tract at residues 1354–1411 (GPPGPPGPPGPRGYPGIPGPKGESIRGQPGPPGPQGPPGIGYEGRQGPPGPPGPPGPP) is triple-helical region 9 (COL9). Residues 1412–1424 (SFPGPHRQTISVP) form a nonhelical region 10 (NC10) region. The interval 1425 to 1442 (GPPGPPGPPGPPGTMGAS) is triple-helical region 10 (COL10). A nonhelical region 11 (NC11) region spans residues 1443 to 1754 (SGVRLWATRQ…IENSFMTASK (312 aa)). A non-collagenous domain 1 association domain region spans residues 1456–1501 (GQVHEVPEGWLIFVAEQEELYVRVQNGFRKVQLEARTPLPRGTDNE). Residues 1502–1571 (VAALQPPVVQ…RPARPTSPPA (70 aa)) form a non-collagenous domain 1 hinge region region. Residues 1511-1556 (QLHDSNPYPRREHPHPTARPWRADDILASPPRLPEPQPYPGAPHHS) are disordered. Basic and acidic residues predominate over residues 1519–1535 (PRREHPHPTARPWRADD). Positions 1541-1551 (PRLPEPQPYPG) are enriched in pro residues. Residue T1567 is glycosylated (O-linked (GalNAc...) threonine). Positions 1572, 1574, 1582, and 1647 each coordinate Zn(2+). Intrachain disulfides connect C1604–C1744 and C1706–C1736.

It belongs to the multiplexin collagen family. Forms homotrimers. Recombinant non-collagenous domain 1 has stronger affinity to NID1, HSPG2 and laminin-1:NID1 complex and lower affinity to FBLN1 and FBLN2 than endostatin. In terms of assembly, monomeric. Interacts with KDR/VEGFR2. Interacts with the ITGA5:ITGB1 complex. Interacts with NID1, HSPG2, laminin-1:NID1 complex, FBLN1 and FBLN2. In terms of processing, prolines at the third position of the tripeptide repeating unit (G-X-Y) of the triple-helical regions are hydroxylated. Circulating endostatins are found as sialoglycoprotein and asialoglycoprotein structures. Post-translationally, undergoes proteolytic processing by CTSL/cathepsin-L and elastase-like proteases to generate both non-collagenous domain 1 trimers and endostatin monomers. In tissue extracts (brain, skeletal muscle, heart, kidney, testis and liver) predominantly bands of approximately 38 kDa are detected; recombinant non-collagenous domain 1 shows similar mobility. In vitro, several proteolytic cleavage sites in the non-collagenous domain 1 hinge region generating different endostatin-like peptides are reported. As to expression, detected in placenta (at protein level). Present in multiple organs with highest levels in liver, lung and kidney.

The protein localises to the secreted. The protein resides in the extracellular space. Its subcellular location is the extracellular matrix. It localises to the basement membrane. Its function is as follows. Probably plays a major role in determining the retinal structure as well as in the closure of the neural tube. Functionally, may regulate extracellular matrix-dependent motility and morphogenesis of endothelial and non-endothelial cells; the function requires homotrimerization and implicates MAPK signaling. In terms of biological role, potently inhibits endothelial cell proliferation and angiogenesis. May inhibit angiogenesis by binding to the heparan sulfate proteoglycans involved in growth factor signaling. Inhibits VEGFA-induced endothelial cell proliferation and migration. Seems to inhibit VEGFA-mediated signaling by blocking the interaction of VEGFA to its receptor KDR/VEGFR2. Modulates endothelial cell migration in an integrin-dependent manner implicating integrin ITGA5:ITGB1 and to a lesser extent ITGAV:ITGB3 and ITGAV:ITGB5. May negatively regulate the activity of homotrimeric non-collagenous domain 1. This Homo sapiens (Human) protein is Collagen alpha-1(XVIII) chain.